The primary structure comprises 54 residues: Ribulose bisphosphate carboxylase large chain (54 aa).

A propeptide spanning residues 1-2 (MS) is cleaved from the precursor. An N-acetylproline modification is found at Pro3. Lys14 carries the N6,N6,N6-trimethyllysine modification.

The protein belongs to the RuBisCO large chain family. Type I subfamily. In terms of assembly, heterohexadecamer of 8 large chains and 8 small chains.

The protein resides in the plastid. The protein localises to the chloroplast. The catalysed reaction is 2 (2R)-3-phosphoglycerate + 2 H(+) = D-ribulose 1,5-bisphosphate + CO2 + H2O. The enzyme catalyses D-ribulose 1,5-bisphosphate + O2 = 2-phosphoglycolate + (2R)-3-phosphoglycerate + 2 H(+). In terms of biological role, ruBisCO catalyzes two reactions: the carboxylation of D-ribulose 1,5-bisphosphate, the primary event in carbon dioxide fixation, as well as the oxidative fragmentation of the pentose substrate in the photorespiration process. Both reactions occur simultaneously and in competition at the same active site. The sequence is that of Ribulose bisphosphate carboxylase large chain (rbcL) from Ilex ciliospinosa (Sichuan holly).